The chain runs to 213 residues: Thiamine-phosphate synthase (213 aa).

4-amino-2-methyl-5-(diphosphooxymethyl)pyrimidine-binding positions include 38 to 42 (QLREK) and asparagine 73. Mg(2+) is bound by residues aspartate 74 and aspartate 93. 4-amino-2-methyl-5-(diphosphooxymethyl)pyrimidine is bound at residue serine 111. 137-139 (TTS) is a 2-[(2R,5Z)-2-carboxy-4-methylthiazol-5(2H)-ylidene]ethyl phosphate binding site. Residue lysine 140 coordinates 4-amino-2-methyl-5-(diphosphooxymethyl)pyrimidine. 2-[(2R,5Z)-2-carboxy-4-methylthiazol-5(2H)-ylidene]ethyl phosphate contacts are provided by residues glycine 169 and 189–190 (IS).

It belongs to the thiamine-phosphate synthase family. It depends on Mg(2+) as a cofactor.

It carries out the reaction 2-[(2R,5Z)-2-carboxy-4-methylthiazol-5(2H)-ylidene]ethyl phosphate + 4-amino-2-methyl-5-(diphosphooxymethyl)pyrimidine + 2 H(+) = thiamine phosphate + CO2 + diphosphate. It catalyses the reaction 2-(2-carboxy-4-methylthiazol-5-yl)ethyl phosphate + 4-amino-2-methyl-5-(diphosphooxymethyl)pyrimidine + 2 H(+) = thiamine phosphate + CO2 + diphosphate. The enzyme catalyses 4-methyl-5-(2-phosphooxyethyl)-thiazole + 4-amino-2-methyl-5-(diphosphooxymethyl)pyrimidine + H(+) = thiamine phosphate + diphosphate. It functions in the pathway cofactor biosynthesis; thiamine diphosphate biosynthesis; thiamine phosphate from 4-amino-2-methyl-5-diphosphomethylpyrimidine and 4-methyl-5-(2-phosphoethyl)-thiazole: step 1/1. Its function is as follows. Condenses 4-methyl-5-(beta-hydroxyethyl)thiazole monophosphate (THZ-P) and 2-methyl-4-amino-5-hydroxymethyl pyrimidine pyrophosphate (HMP-PP) to form thiamine monophosphate (TMP). In Lysinibacillus sphaericus (strain C3-41), this protein is Thiamine-phosphate synthase.